We begin with the raw amino-acid sequence, 668 residues long: mRNA cap guanine-N(7) methyltransferase (668 aa).

Residues Met-1–Ser-19 show a composition bias toward basic and acidic residues. Residues Met-1–Ala-281 form a disordered region. Polar residues predominate over residues Gly-44 to Ser-65. A compositionally biased stretch (low complexity) spans Ser-73 to Thr-88. Polar residues predominate over residues Lys-100 to Ala-129. Basic and acidic residues predominate over residues Pro-133–Asn-142. Residues Ala-148–Gln-157 show a composition bias toward polar residues. Residues Leu-257–Met-279 are compositionally biased toward basic and acidic residues. Residues Ser-310 to Val-668 form the mRNA cap 0 methyltransferase domain. Asn-319 to Asn-320 is an mRNA binding site. S-adenosyl-L-methionine is bound by residues Lys-323, Gly-366, Asp-390, Asp-428, Met-471–Thr-473, and Tyr-476. Residues Ala-524 to Asp-547 form a disordered region. Acidic residues predominate over residues Ala-537–Asp-547.

Belongs to the class I-like SAM-binding methyltransferase superfamily. mRNA cap 0 methyltransferase family.

It is found in the nucleus. It catalyses the reaction a 5'-end (5'-triphosphoguanosine)-ribonucleoside in mRNA + S-adenosyl-L-methionine = a 5'-end (N(7)-methyl 5'-triphosphoguanosine)-ribonucleoside in mRNA + S-adenosyl-L-homocysteine. In terms of biological role, responsible for methylating the 5'-cap structure of mRNAs. The protein is mRNA cap guanine-N(7) methyltransferase (abd1) of Aspergillus fumigatus (strain ATCC MYA-4609 / CBS 101355 / FGSC A1100 / Af293) (Neosartorya fumigata).